The sequence spans 346 residues: (R,R)-butanediol dehydrogenase (346 aa).

Positions 37, 70, and 152 each coordinate Zn(2+).

The protein belongs to the zinc-containing alcohol dehydrogenase family. As to quaternary structure, homotetramer. Interacts with BrxC. It depends on Zn(2+) as a cofactor.

It is found in the cytoplasm. Its subcellular location is the secreted. It carries out the reaction (R,R)-butane-2,3-diol + NAD(+) = (R)-acetoin + NADH + H(+). The protein is (R,R)-butanediol dehydrogenase of Bacillus subtilis (strain 168).